The following is a 506-amino-acid chain: RNA-splicing ligase RtcB homolog (506 aa).

Mn(2+) contacts are provided by Asp120, Cys123, His228, His260, and His354. 227–231 (NHYAE) is a binding site for GMP. GMP is bound by residues 354–355 (HN), 403–406 (GGTM), Ser410, 429–432 (HGAG), and Lys505. The GMP-histidine intermediate role is filled by His429.

The protein belongs to the RtcB family. In terms of assembly, catalytic component of the tRNA-splicing ligase complex. It depends on Mn(2+) as a cofactor.

The enzyme catalyses a 3'-end 3'-phospho-ribonucleotide-RNA + a 5'-end dephospho-ribonucleoside-RNA + GTP = a ribonucleotidyl-ribonucleotide-RNA + GMP + diphosphate. The catalysed reaction is a 3'-end 2',3'-cyclophospho-ribonucleotide-RNA + a 5'-end dephospho-ribonucleoside-RNA + GTP + H2O = a ribonucleotidyl-ribonucleotide-RNA + GMP + diphosphate + H(+). Catalytic subunit of the tRNA-splicing ligase complex that acts by directly joining spliced tRNA halves to mature-sized tRNAs by incorporating the precursor-derived splice junction phosphate into the mature tRNA as a canonical 3',5'-phosphodiester. May act as an RNA ligase with broad substrate specificity, and may function toward other RNAs. The chain is RNA-splicing ligase RtcB homolog from Drosophila melanogaster (Fruit fly).